The sequence spans 808 residues: DNA gyrase subunit B (808 aa).

Positions 429–544 constitute a Toprim domain; the sequence is SELFIVEGDS…KGYLYIAQPP (116 aa). 3 residues coordinate Mg(2+): Glu435, Asp509, and Asp511.

It belongs to the type II topoisomerase GyrB family. Heterotetramer, composed of two GyrA and two GyrB chains. In the heterotetramer, GyrA contains the active site tyrosine that forms a transient covalent intermediate with DNA, while GyrB binds cofactors and catalyzes ATP hydrolysis. Mg(2+) is required as a cofactor. It depends on Mn(2+) as a cofactor. Requires Ca(2+) as cofactor.

The protein localises to the cytoplasm. It carries out the reaction ATP-dependent breakage, passage and rejoining of double-stranded DNA.. Functionally, a type II topoisomerase that negatively supercoils closed circular double-stranded (ds) DNA in an ATP-dependent manner to modulate DNA topology and maintain chromosomes in an underwound state. Negative supercoiling favors strand separation, and DNA replication, transcription, recombination and repair, all of which involve strand separation. Also able to catalyze the interconversion of other topological isomers of dsDNA rings, including catenanes and knotted rings. Type II topoisomerases break and join 2 DNA strands simultaneously in an ATP-dependent manner. The polypeptide is DNA gyrase subunit B (Rickettsia felis (strain ATCC VR-1525 / URRWXCal2) (Rickettsia azadi)).